The following is a 71-amino-acid chain: General transcription and DNA repair factor IIH subunit TFB5 (71 aa).

The protein belongs to the TFB5 family. As to quaternary structure, component of the 7-subunit TFIIH core complex composed of XPB, XPD, TFB1/GTF2H1, GTF2H2/P44, TFB4/GTF2H3, TFB2/GTF2H4 and TFB5/GTF2H5, which is active in NER. The core complex associates with the 3-subunit CDK-activating kinase (CAK) module composed of CYCH1/cyclin H1, CDKD and MAT1/At4g30820 to form the 10-subunit holoenzyme (holo-TFIIH) active in transcription.

Its subcellular location is the nucleus. Functionally, component of the general transcription and DNA repair factor IIH (TFIIH) core complex, which is involved in general and transcription-coupled nucleotide excision repair (NER) of damaged DNA and, when complexed to CAK, in RNA transcription by RNA polymerase II. In NER, TFIIH acts by opening DNA around the lesion to allow the excision of the damaged oligonucleotide and its replacement by a new DNA fragment. In transcription, TFIIH has an essential role in transcription initiation. When the pre-initiation complex (PIC) has been established, TFIIH is required for promoter opening and promoter escape. Phosphorylation of the C-terminal tail (CTD) of the largest subunit of RNA polymerase II by the kinase module CAK controls the initiation of transcription. The protein is General transcription and DNA repair factor IIH subunit TFB5 of Arabidopsis thaliana (Mouse-ear cress).